Consider the following 312-residue polypeptide: MAQSKILLYYKFTPIADPKAMMLWQRDMCELLGLKGRILISEHGINGTVGGDMDACKRYVRKMREYPGFRGTEFKWSDGGAEDFPKLSVKVRDEIVAFGAPGELKVDEKGVIGGGVHLKPEEVNKLVEERGDDVVFFDGRNAMEAQIGKFKNAVVPDVRTTHDFIRELESGKYDWMKDKPVVSYCTGGIRCEILSSLMKNRGFKEIYQIDGGIVRYGEKYGNDGLWEGSLYVFDRRMHMEFGNGVQDPGFIQLGHCVQCGAPTNKFEHCINEDECRELVLMCPDCYENPATRNCGREHCKEVAAEAAAAAAV.

Positions 130–225 (RGDDVVFFDG…YGEKYGNDGL (96 aa)) constitute a Rhodanese domain. C185 functions as the Cysteine persulfide intermediate in the catalytic mechanism.

The protein belongs to the TrhO family.

It catalyses the reaction uridine(34) in tRNA + AH2 + O2 = 5-hydroxyuridine(34) in tRNA + A + H2O. In terms of biological role, catalyzes oxygen-dependent 5-hydroxyuridine (ho5U) modification at position 34 in tRNAs. This Corynebacterium diphtheriae (strain ATCC 700971 / NCTC 13129 / Biotype gravis) protein is tRNA uridine(34) hydroxylase.